The chain runs to 332 residues: Putative integrase/recombinase y4rC (332 aa).

Residues 5 to 98 (ASLAPLLESF…AIHSFFRYAA (94 aa)) enclose the Core-binding (CB) domain. Positions 122–307 (TLVNFLTRPE…TLAMKEAALA (186 aa)) constitute a Tyr recombinase domain. Active-site residues include R162, K187, H259, R262, and H285. The active-site O-(3'-phospho-DNA)-tyrosine intermediate is Y294.

This sequence belongs to the 'phage' integrase family.

In Sinorhizobium fredii (strain NBRC 101917 / NGR234), this protein is Putative integrase/recombinase y4rC.